Here is a 418-residue protein sequence, read N- to C-terminus: Gamma-glutamyl phosphate reductase (418 aa).

Belongs to the gamma-glutamyl phosphate reductase family.

It localises to the cytoplasm. It catalyses the reaction L-glutamate 5-semialdehyde + phosphate + NADP(+) = L-glutamyl 5-phosphate + NADPH + H(+). Its pathway is amino-acid biosynthesis; L-proline biosynthesis; L-glutamate 5-semialdehyde from L-glutamate: step 2/2. In terms of biological role, catalyzes the NADPH-dependent reduction of L-glutamate 5-phosphate into L-glutamate 5-semialdehyde and phosphate. The product spontaneously undergoes cyclization to form 1-pyrroline-5-carboxylate. This is Gamma-glutamyl phosphate reductase from Desulforapulum autotrophicum (strain ATCC 43914 / DSM 3382 / VKM B-1955 / HRM2) (Desulfobacterium autotrophicum).